The sequence spans 326 residues: Small ribosomal subunit protein RACK1x (326 aa).

WD repeat units lie at residues 13–53 (AHTD…KSYG), 61–100 (GHSHFVEDVVLSSDGQFALSGSWDGELRLWDLATGETTRR), 103–142 (GHTKDVLSVAFSTDNRQIVSASRDRTIKLWNTLGECKYTI), 147–188 (GHKE…LRNS), 191–230 (GHSGYLNTVAVSPDGSLCASGGKDGVILLWDLAEGKKLYS), 232–270 (EAGSIIHSLCFSPNRYWLCAATENSIRIWDLESKSVVED), and 290–326 (NQKKVIYCTSLNWSADGSTLFSGYTDGVVRVWGIGRY).

It belongs to the WD repeat G protein beta family. Ribosomal protein RACK1 subfamily. In terms of assembly, homodimer and heterodimer with RACK1A or RACK1B. Interacts with GB1, MEKK1, MKK4, MKK5, MPK3 and MPK6, but not with GPA1 or MPK4. As to expression, widely expressed.

Minor component of the RACK1 regulatory proteins that play a role in multiple signal transduction pathways. Involved in multiple hormone responses and developmental processes. MAPK cascade scaffolding protein involved in the protease IV and ArgC signaling pathway but not the flg22 pathway. The protein is Small ribosomal subunit protein RACK1x of Arabidopsis thaliana (Mouse-ear cress).